Here is a 389-residue protein sequence, read N- to C-terminus: Chalcone synthase 2 (389 aa).

Residue 55 to 62 (KFQRMCDK) coordinates CoA. The active-site Acyl-thioester intermediate is cysteine 164. Substrate contacts are provided by residues threonine 197 and 216–217 (GD). Alanine 308 contributes to the CoA binding site.

Belongs to the thiolase-like superfamily. Chalcone/stilbene synthases family. As to quaternary structure, homodimer.

The enzyme catalyses (E)-4-coumaroyl-CoA + 3 malonyl-CoA + 3 H(+) = 2',4,4',6'-tetrahydroxychalcone + 3 CO2 + 4 CoA. It functions in the pathway secondary metabolite biosynthesis; flavonoid biosynthesis. In terms of biological role, the primary product of this enzyme is 4,2',4',6'-tetrahydroxychalcone (also termed naringenin-chalcone or chalcone) which can under specific conditions spontaneously isomerize into naringenin. This Medicago sativa (Alfalfa) protein is Chalcone synthase 2 (CHS2).